The chain runs to 506 residues: Radiation-sensitive protein 28 (506 aa).

WD repeat units lie at residues 55-94, 193-233, 285-325, 357-396, and 404-451; these read PLSI…HRND, HHKY…AVQD, RMQS…RLYS, AHLR…LQPE, and LGTQ…LWNK.

The protein resides in the nucleus. Involved in transcription-coupled repair nucleotide excision repair (NER) of UV-induced DNA lesions. The sequence is that of Radiation-sensitive protein 28 (RAD28) from Saccharomyces cerevisiae (strain ATCC 204508 / S288c) (Baker's yeast).